A 125-amino-acid polypeptide reads, in one-letter code: Large-conductance mechanosensitive channel (125 aa).

A run of 2 helical transmembrane segments spans residues 14–34 (VIDL…VQSL) and 67–87 (GSFL…FLIV).

The protein belongs to the MscL family. As to quaternary structure, homopentamer.

Its subcellular location is the cell membrane. In terms of biological role, channel that opens in response to stretch forces in the membrane lipid bilayer. May participate in the regulation of osmotic pressure changes within the cell. The protein is Large-conductance mechanosensitive channel of Lactobacillus helveticus (strain DPC 4571).